A 207-amino-acid chain; its full sequence is MANVKLFDQTGKEVSSVELNDAVFGIEPNESVVFDVVISQRASLRQGTHAVKNRSAVSGGGRKPWRQKGTGRARQGSIRSPQWRGGGVVFGPTPRSYGYKLPQKVRRLALKSVYSAKVAEDKFVAVEGLSFAAPKTAEFAKVLSALSIDTKVLVLVEEGNEFAALSARNLPNVTVATAATASVLDIVNADKLLVTKEAISTIEEVLA.

The interval 49 to 78 (HAVKNRSAVSGGGRKPWRQKGTGRARQGSI) is disordered.

This sequence belongs to the universal ribosomal protein uL4 family. Part of the 50S ribosomal subunit.

One of the primary rRNA binding proteins, this protein initially binds near the 5'-end of the 23S rRNA. It is important during the early stages of 50S assembly. It makes multiple contacts with different domains of the 23S rRNA in the assembled 50S subunit and ribosome. Its function is as follows. Forms part of the polypeptide exit tunnel. This chain is Large ribosomal subunit protein uL4, found in Streptococcus pyogenes serotype M49 (strain NZ131).